A 1455-amino-acid chain; its full sequence is Membrane-associated guanylate kinase, WW and PDZ domain-containing protein 2 (1455 aa).

One can recognise a PDZ 1 domain in the interval 17–101 (ESVIGRNPEG…PLRLKCVKQG (85 aa)). Residues 109-283 (RHYLNLRFQK…APVYSQPEEL (175 aa)) form the Guanylate kinase-like domain. The disordered stretch occupies residues 205 to 306 (PGATPSAEGK…DNEEPDPLPD (102 aa)). Over residues 241–252 (VVNGNGVVVTPE) the composition is skewed to low complexity. Residues 281–296 (EELKEQMDDTKPTKPE) show a composition bias toward basic and acidic residues. 2 consecutive WW domains span residues 302 to 335 (DPLPDNWEMAYTEKGEVYFIDHNTKTTSWLDPRL) and 348 to 381 (NELPYGWEKIDDPIYGTYYVDHINRRTQFENPVL). The interaction with DDN stretch occupies residues 302-381 (DPLPDNWEMA…RRTQFENPVL (80 aa)). Y362 carries the phosphotyrosine modification. PDZ domains are found at residues 426–510 (STTL…CRGY) and 605–683 (TLTI…HRGG). A Phosphoserine modification is found at S686. Positions 778 to 860 (DVHLRRMESG…NGQVNLTVRR (83 aa)) constitute a PDZ 4 domain. The residue at position 827 (Y827) is a Phosphotyrosine. Positions 869 to 913 (CPENGRSPGSVSTHHSSPRSDYATYTNSNHAAPSSNASPPEGFAS) are disordered. 2 positions are modified to phosphoserine: S884 and S885. A compositionally biased stretch (low complexity) spans 895–908 (NSNHAAPSSNASPP). Residues 920–1010 (DVVIHRKENE…SVTLRIIPQE (91 aa)) enclose the PDZ 5 domain. Residues 1011 to 1040 (ELNSPTSAPSSEKQSPMAQQSPLAQQSPLA) show a composition bias toward polar residues. The disordered stretch occupies residues 1011–1136 (ELNSPTSAPS…PDTRQYPLSD (126 aa)). S1014 carries the phosphoserine modification. Basic and acidic residues predominate over residues 1067 to 1083 (NSYRSEVKARQDVKPDI). The 83-residue stretch at 1147-1229 (TVDMEKGAKG…RVRLLLKRGT (83 aa)) folds into the PDZ 6 domain. Residues 1231–1455 (QVPEYDEPAP…LKPGASAASR (225 aa)) form a disordered region. A compositionally biased stretch (low complexity) spans 1238–1249 (PAPWSSPAAAAP). Basic and acidic residues predominate over residues 1287-1299 (DIKREHDVRKPKE). Composition is skewed to low complexity over residues 1346–1363 (EARAPGLAAADAADAARA), 1399–1412 (ALEAEGRAGARAGP), and 1422–1433 (APARKAAVAPGP).

The protein belongs to the MAGUK family. As to quaternary structure, interacts (via its WW domains) with DRPLA. Interacts (via its second PDZ domain) with PTEN (via unphosphorylated C-terminus); this interaction diminishes the degradation rate of PTEN. Interacts (via guanylate kinase domain) with DLGAP1. Interacts (via the PDZ domains) with GRIN2A, GRID2 and NLGN1. Interacts with CTNND2, CTNNB1, MAGUIN-1, ACVR2A, SMAD2 and SMAD3. Part of a complex consisting of MAGI2/ARIP1, ACVR2A, ACVR1B and SMAD3. May interact with HTR2A. Interacts with IGSF9, RAPGEF2 and HTR4. Identified in a complex with ACTN4, CASK, IQGAP1, NPHS1, SPTAN1 and SPTBN1. Found in a complex, at least composed of KIDINS220, MAGI2, NTRK1 and RAPGEF2; the complex is mainly formed at late endosomes in a NGF-dependent manner. Interacts with RAPGEF2; the interaction occurs before or after nerve growth factor (NGF) stimulation. Interacts (via PDZ domain) with KIDINS220 (via C-terminal domain). Interacts with DDN. Interacts with DLL1. Found in a complex with IGSF9B and NLGN2; the interaction with IGSF9B is mediated via the PDZ 5 and PDZ 6 domains, while the interaction with NLGN2 is mediated via the WW1, WW2 and PDZ2 domains. Interacts (via PDZ 6 domain) with USH1G (via SAM domain); the interaction is triggered by phosphorylation of USH1G by CK2 and negatively regulates MAGI2-mediated endocytosis. As to expression, specifically expressed in brain.

The protein resides in the cytoplasm. It is found in the late endosome. Its subcellular location is the synapse. The protein localises to the synaptosome. It localises to the cell membrane. The protein resides in the cytoskeleton. It is found in the microtubule organizing center. Its subcellular location is the centrosome. The protein localises to the cell projection. It localises to the cilium. The protein resides in the centriole. It is found in the photoreceptor inner segment. Its subcellular location is the photoreceptor outer segment. Functionally, seems to act as a scaffold molecule at synaptic junctions by assembling neurotransmitter receptors and cell adhesion proteins. Plays a role in nerve growth factor (NGF)-induced recruitment of RAPGEF2 to late endosomes and neurite outgrowth. May play a role in regulating activin-mediated signaling in neuronal cells. Enhances the ability of PTEN to suppress AKT1 activation. Plays a role in receptor-mediated clathrin-dependent endocytosis which is required for ciliogenesis. This is Membrane-associated guanylate kinase, WW and PDZ domain-containing protein 2 (MAGI2) from Homo sapiens (Human).